The following is a 179-amino-acid chain: MAEERSQRNRDRSREEKIDDGMIEKLVAVNRVSKTVKGGRQFTFTALTIVGNGEGSVGFGYGKAREVPVAIQKSMEYARKTMANVSLNNGTLWHPVKANHGAACVFMKPASEGTGVIAGGAMRAVLEAVGVKDVLAKAIGSRNPINLVRATLKGLEDMQSPTHIALKRGKNVRGFSHGS.

Residues 22–85 form the S5 DRBM domain; sequence MIEKLVAVNR…EYARKTMANV (64 aa).

This sequence belongs to the universal ribosomal protein uS5 family. In terms of assembly, part of the 30S ribosomal subunit. Contacts proteins S4 and S8.

In terms of biological role, with S4 and S12 plays an important role in translational accuracy. Functionally, located at the back of the 30S subunit body where it stabilizes the conformation of the head with respect to the body. The chain is Small ribosomal subunit protein uS5 from Xylella fastidiosa (strain 9a5c).